The chain runs to 922 residues: Isoleucine--tRNA ligase (922 aa).

The short motif at 57 to 67 is the 'HIGH' region element; the sequence is PYANGDIHMGH. Position 553 (E553) interacts with L-isoleucyl-5'-AMP. A 'KMSKS' region motif is present at residues 594–598; that stretch reads KMSKS. ATP is bound at residue K597. Positions 889, 892, 909, and 912 each coordinate Zn(2+).

Belongs to the class-I aminoacyl-tRNA synthetase family. IleS type 1 subfamily. As to quaternary structure, monomer. Requires Zn(2+) as cofactor.

It is found in the cytoplasm. The enzyme catalyses tRNA(Ile) + L-isoleucine + ATP = L-isoleucyl-tRNA(Ile) + AMP + diphosphate. Functionally, catalyzes the attachment of isoleucine to tRNA(Ile). As IleRS can inadvertently accommodate and process structurally similar amino acids such as valine, to avoid such errors it has two additional distinct tRNA(Ile)-dependent editing activities. One activity is designated as 'pretransfer' editing and involves the hydrolysis of activated Val-AMP. The other activity is designated 'posttransfer' editing and involves deacylation of mischarged Val-tRNA(Ile). The chain is Isoleucine--tRNA ligase from Bacillus licheniformis (strain ATCC 14580 / DSM 13 / JCM 2505 / CCUG 7422 / NBRC 12200 / NCIMB 9375 / NCTC 10341 / NRRL NRS-1264 / Gibson 46).